The sequence spans 299 residues: Nicotinate-nucleotide pyrophosphorylase [carboxylating] (299 aa).

An important for hexamer formation region spans residues 8-12; the sequence is FLLPP. Residues Arg102, 138 to 139, 160 to 161, Lys171, Glu201, Asp222, 248 to 250, and Gly270 contribute to the quinolinate site; these read RK, HR, and SGG.

It belongs to the NadC/ModD family. In terms of assembly, hexamer formed by 3 homodimers.

The enzyme catalyses nicotinate beta-D-ribonucleotide + CO2 + diphosphate = quinolinate + 5-phospho-alpha-D-ribose 1-diphosphate + 2 H(+). It participates in cofactor biosynthesis; NAD(+) biosynthesis; nicotinate D-ribonucleotide from quinolinate: step 1/1. Functionally, involved in the catabolism of quinolinic acid (QA). This is Nicotinate-nucleotide pyrophosphorylase [carboxylating] (Qprt) from Rattus norvegicus (Rat).